The primary structure comprises 216 residues: MESRLTEREEMVRWQIEARGVKNPRVLQAMRSVPRHLFVPEPYAREAYQDYPLPIGNDQTISQPYIVAVMTELLSPEKGDLILEIGTGSGYQAAILVACGASVISIERIPAVADLAKRNLTRAGIRNVLVLCQDGTQGYAEKAPYNGILITAATPALPEPLLEELADGGRLVAPVGDRDIQELTRVTRNKDEYHTERFGAVRFVPLIGMYGWKKEW.

The active site involves Ser62.

This sequence belongs to the methyltransferase superfamily. L-isoaspartyl/D-aspartyl protein methyltransferase family.

It localises to the cytoplasm. The enzyme catalyses [protein]-L-isoaspartate + S-adenosyl-L-methionine = [protein]-L-isoaspartate alpha-methyl ester + S-adenosyl-L-homocysteine. Functionally, catalyzes the methyl esterification of L-isoaspartyl residues in peptides and proteins that result from spontaneous decomposition of normal L-aspartyl and L-asparaginyl residues. It plays a role in the repair and/or degradation of damaged proteins. The protein is Protein-L-isoaspartate O-methyltransferase of Methanospirillum hungatei JF-1 (strain ATCC 27890 / DSM 864 / NBRC 100397 / JF-1).